We begin with the raw amino-acid sequence, 754 residues long: Phosphoribosylformylglycinamidine synthase subunit PurL (754 aa).

Histidine 54 is a catalytic residue. Tyrosine 57 and lysine 101 together coordinate ATP. Glutamate 103 contributes to the Mg(2+) binding site. Residues 104-107 (SHNH) and arginine 126 contribute to the substrate site. Catalysis depends on histidine 105, which acts as the Proton acceptor. A Mg(2+)-binding site is contributed by aspartate 127. Glutamine 252 lines the substrate pocket. Aspartate 280 contributes to the Mg(2+) binding site. 324–326 (ESQ) contacts substrate. Positions 386–412 (PVYQRPVSRPESQEALNADSSKGLPRP) are disordered. Residues asparagine 512 and glycine 549 each contribute to the ATP site. Asparagine 550 is a binding site for Mg(2+). Serine 552 is a substrate binding site.

Belongs to the FGAMS family. As to quaternary structure, monomer. Part of the FGAM synthase complex composed of 1 PurL, 1 PurQ and 2 PurS subunits.

The protein localises to the cytoplasm. It carries out the reaction N(2)-formyl-N(1)-(5-phospho-beta-D-ribosyl)glycinamide + L-glutamine + ATP + H2O = 2-formamido-N(1)-(5-O-phospho-beta-D-ribosyl)acetamidine + L-glutamate + ADP + phosphate + H(+). It functions in the pathway purine metabolism; IMP biosynthesis via de novo pathway; 5-amino-1-(5-phospho-D-ribosyl)imidazole from N(2)-formyl-N(1)-(5-phospho-D-ribosyl)glycinamide: step 1/2. In terms of biological role, part of the phosphoribosylformylglycinamidine synthase complex involved in the purines biosynthetic pathway. Catalyzes the ATP-dependent conversion of formylglycinamide ribonucleotide (FGAR) and glutamine to yield formylglycinamidine ribonucleotide (FGAM) and glutamate. The FGAM synthase complex is composed of three subunits. PurQ produces an ammonia molecule by converting glutamine to glutamate. PurL transfers the ammonia molecule to FGAR to form FGAM in an ATP-dependent manner. PurS interacts with PurQ and PurL and is thought to assist in the transfer of the ammonia molecule from PurQ to PurL. This chain is Phosphoribosylformylglycinamidine synthase subunit PurL, found in Mycobacterium leprae (strain Br4923).